A 563-amino-acid chain; its full sequence is Tripeptidyl-peptidase 1 (563 aa).

An N-terminal signal peptide occupies residues 1 to 19; the sequence is MGLQACLLGLFALILSGKC. Residues 20–195 constitute a propeptide, removed in mature form; the sequence is SYSPEPDQRR…PEPQVTGTVG (176 aa). A disulfide bridge connects residues Cys-111 and Cys-122. The Peptidase S53 domain maps to 199–563; it reads GVTPSVIRKR…PALLKTLLNP (365 aa). 2 N-linked (GlcNAc...) asparagine glycosylation sites follow: Asn-210 and Asn-222. Active-site charge relay system residues include Glu-272 and Asp-276. Residues Asn-286, Asn-313, and Asn-443 are each glycosylated (N-linked (GlcNAc...) asparagine). Disulfide bonds link Cys-365–Cys-526 and Cys-522–Cys-537. Residue Ser-475 is the Charge relay system of the active site. Residues Asp-517 and Val-518 each coordinate Ca(2+). Positions 539, 541, and 543 each coordinate Ca(2+).

In terms of assembly, monomer. Interacts with CLN5. Interacts with CLN3. Requires Ca(2+) as cofactor. Activated by autocatalytic proteolytical processing upon acidification. N-glycosylation is required for processing and activity.

It localises to the lysosome. The protein localises to the melanosome. It catalyses the reaction Release of an N-terminal tripeptide from a polypeptide, but also has endopeptidase activity.. Functionally, lysosomal serine protease with tripeptidyl-peptidase I activity. May act as a non-specific lysosomal peptidase which generates tripeptides from the breakdown products produced by lysosomal proteinases. Requires substrates with an unsubstituted N-terminus. This chain is Tripeptidyl-peptidase 1 (TPP1), found in Macaca fascicularis (Crab-eating macaque).